We begin with the raw amino-acid sequence, 1738 residues long: Complement C4-B (1738 aa).

The signal sequence occupies residues 1-19 (MRLLWGLAWVFSFCASSLQ). Cysteine 66 and cysteine 95 are oxidised to a cystine. An N-linked (GlcNAc...) asparagine glycan is attached at asparagine 224. Cysteine 633 and cysteine 667 are joined by a disulfide. A propeptide spanning residues 674-677 (RQKR) is cleaved from the precursor. 3 disulfide bridges follow: cysteine 700-cysteine 726, cysteine 701-cysteine 733, and cysteine 714-cysteine 734. An Anaphylatoxin-like domain is found at 700-734 (CCQDGMTKLPMKRTCEQRAARVPQQACREPFLSCC). Residue asparagine 743 is glycosylated (N-linked (GlcNAc...) asparagine). Positions 1006–1009 (CAEQ) form a cross-link, isoglutamyl cysteine thioester (Cys-Gln). Asparagine 1324 and asparagine 1387 each carry an N-linked (GlcNAc...) asparagine glycan. Sulfotyrosine is present on residues tyrosine 1413, tyrosine 1416, and tyrosine 1417. The propeptide occupies 1444-1447 (RRRR). Cystine bridges form between cysteine 1465/cysteine 1529, cysteine 1577/cysteine 1582, cysteine 1589/cysteine 1667, cysteine 1612/cysteine 1736, and cysteine 1712/cysteine 1721. Residues 1589–1736 (CPRLLRSLER…FLMEFSSRGC (148 aa)) form the NTR domain.

In absence of complement activation, circulates in blood as a disulfide-linked trimer of an alpha, beta and gamma chain. As to quaternary structure, complement C4b is composed of complement C4b-A, complement C4 beta and complement C4 gamma chains that are associated via disulfide bonds. Non-enzymatic component of the C3 convertase, also named C4bC2b, composed of the serine protease complement C2b (C2), as well as complement C4b. Non-enzymatic component of the C5 convertase, also named C4bC2bC3b, composed of the serine protease complement C2b (C2), complement C3b, as well as complement C4b. Post-translationally, prior to secretion, the single-chain precursor is enzymatically cleaved by plasminogen (PLG) to yield non-identical chains alpha, beta and gamma. During activation of the complement systems, the alpha chain is cleaved into C4a and C4b by different proteases depending on the complement pathway: C4b stays linked to the beta and gamma chains, while C4a is released in the plasma. The alpha chain is cleaved by C1S to generate C4a and C4b following activation by the classical complement system. The alpha chain is cleaved to generate C4a and C4b by MASP2 following activation by the lectin complement system. The alpha chain is cleaved by GZMK to generate C4a and C4b following activation by the GZMK complement system. Further degradation of C4b by C1 into the inactive fragments C4c and C4d blocks the generation of C3 convertase. The proteolytic cleavages often are incomplete so that many structural forms can be found in plasma. In terms of processing, upon activation, the internal thioester bond reacts with carbohydrate antigens on the target surface to form amide or ester bonds, leading to covalent association with the surface of pathogens. Complement C4b interacts with complement C3b via a thioester linkage.

The protein localises to the secreted. The protein resides in the cell surface. Its function is as follows. Precursor of non-enzymatic components of the classical, lectin and GZMK complement pathways, which consist in a cascade of proteins that leads to phagocytosis and breakdown of pathogens and signaling that strengthens the adaptive immune system. Functionally, non-enzymatic component of C3 and C5 convertases. Generated following cleavage by complement proteases (C1S, MASP2 or GZMK, depending on the complement pathway), it covalently attaches to the surface of pathogens, where it acts as an opsonin that marks the surface of antigens for removal. It then recruits the serine protease complement C2b to form the C3 and C5 convertases, which cleave and activate C3 and C5, respectively, the next components of the complement pathways. Complement C4b-A isotype is responsible for effective binding to form amide bonds with immune aggregates or protein antigens, while complement C4b-B isotype catalyzes the transacylation of the thioester carbonyl group to form ester bonds with carbohydrate antigens. Putative humoral mediator released following cleavage by complement proteases (C1S, MASP2 or GZMK, depending on the complement pathway). While it is strongly similar to anaphylatoxins, its role is unclear. Was reported to act as a mediator of local inflammatory process; however these effects were probably due to contamination with C3a and/C5a anaphylatoxins in biological assays. The sequence is that of Complement C4-B from Mus musculus (Mouse).